The primary structure comprises 295 residues: Acetylglutamate kinase (295 aa).

Residues 70 to 71 (GG), arginine 92, and asparagine 191 contribute to the substrate site.

The protein belongs to the acetylglutamate kinase family. ArgB subfamily.

The protein localises to the cytoplasm. It carries out the reaction N-acetyl-L-glutamate + ATP = N-acetyl-L-glutamyl 5-phosphate + ADP. Its pathway is amino-acid biosynthesis; L-arginine biosynthesis; N(2)-acetyl-L-ornithine from L-glutamate: step 2/4. Functionally, catalyzes the ATP-dependent phosphorylation of N-acetyl-L-glutamate. The sequence is that of Acetylglutamate kinase from Mycolicibacterium paratuberculosis (strain ATCC BAA-968 / K-10) (Mycobacterium paratuberculosis).